The primary structure comprises 547 residues: Chaperonin GroEL 1 (547 aa).

ATP contacts are provided by residues Thr29 to Pro32, Asp86 to Thr90, Gly418, Asn482 to Ala484, and Asp498.

It belongs to the chaperonin (HSP60) family. In terms of assembly, forms a cylinder of 14 subunits composed of two heptameric rings stacked back-to-back. Interacts with the co-chaperonin GroES.

It is found in the cytoplasm. The catalysed reaction is ATP + H2O + a folded polypeptide = ADP + phosphate + an unfolded polypeptide.. In terms of biological role, together with its co-chaperonin GroES, plays an essential role in assisting protein folding. The GroEL-GroES system forms a nano-cage that allows encapsulation of the non-native substrate proteins and provides a physical environment optimized to promote and accelerate protein folding. The protein is Chaperonin GroEL 1 of Corynebacterium jeikeium (strain K411).